The chain runs to 326 residues: Probable oxidoreductase patJ (326 aa).

The segment at 287–326 (HGVQPGSVNGSNGHSTGVESKLEQLGSRAQRRVVIDDAGK) is disordered. Residues 292–304 (GSVNGSNGHSTGV) show a composition bias toward polar residues.

Belongs to the oxidoreductase OpS7 family.

It localises to the vacuole lumen. The protein resides in the cytoplasmic vesicle lumen. Its pathway is mycotoxin biosynthesis; patulin biosynthesis. Functionally, probable oxidoreductase; part of the gene cluster that mediates the biosynthesis of patulin, an acetate-derived tetraketide mycotoxin produced by several fungal species that shows antimicrobial properties against several bacteria. PatJ acts with patO in the vacuole to convert gentisyl alcohol to isoepoxydon. The pathway begins with the synthesis of 6-methylsalicylic acid by the polyketide synthase (PKS) patK via condensation of acetate and malonate units. The 6-methylsalicylic acid decarboxylase patG then catalyzes the decarboxylation of 6-methylsalicylic acid to yield m-cresol (also known as 3-methylphenol). These first reactions occur in the cytosol. The intermediate m-cresol is then transported into the endoplasmic reticulum where the cytochrome P450 monooxygenase patH converts it to m-hydroxybenzyl alcohol, which is further converted to gentisyl alcohol by the cytochrome P450 monooxygenase patI. The oxidoreductases patJ and patO further convert gentisyl alcohol to isoepoxydon in the vacuole. PatN catalyzes then the transformation of isoepoxydon into phyllostine. The cluster protein patF is responsible for the conversion from phyllostine to neopatulin whereas the alcohol dehydrogenase patD converts neopatulin to E-ascladiol. The steps between isoepoxydon and E-ascladiol occur in the cytosol, and E-ascladiol is probably secreted to the extracellular space by one of the cluster-specific transporters patC or patM. Finally, the secreted patulin synthase patE catalyzes the conversion of E-ascladiol to patulin. This Penicillium expansum (Blue mold rot fungus) protein is Probable oxidoreductase patJ.